A 218-amino-acid chain; its full sequence is MRPDGPRDPVAGPDSGPEPPYPVRLSGPVIKGFGRGSKELGIPTANIPAEGLAEYPDLQVGVYYGVVALDPAKFQYQEDQGEGSTSSTGGAGAGAGAAILPAVLSIGYNPFYKNKTKSIEIHIMPPLSSPSPTAEGAGEVKFHKLPDFYGTQLKLLILGYIRPEYDYVSLEALIEDIRVDCEVARKSLQRPAYACYIDGDEKECSDAVREQRRWLVNF.

The tract at residues 1-27 is disordered; it reads MRPDGPRDPVAGPDSGPEPPYPVRLSG. Residues Thr-44 and Asn-46 each contribute to the Mg(2+) site. Glu-120 functions as the Nucleophile in the catalytic mechanism.

This sequence belongs to the flavokinase family. It depends on Zn(2+) as a cofactor. The cofactor is Mg(2+).

It carries out the reaction riboflavin + ATP = FMN + ADP + H(+). It functions in the pathway cofactor biosynthesis; FMN biosynthesis; FMN from riboflavin (ATP route): step 1/1. In terms of biological role, catalyzes the phosphorylation of riboflavin (vitamin B2) to form flavin mononucleotide (FMN) coenzyme. This is Riboflavin kinase (fmn1) from Neosartorya fischeri (strain ATCC 1020 / DSM 3700 / CBS 544.65 / FGSC A1164 / JCM 1740 / NRRL 181 / WB 181) (Aspergillus fischerianus).